The primary structure comprises 198 residues: Transcriptional regulator GfcR (198 aa).

The protein belongs to the purine/pyrimidine phosphoribosyltransferase family. GfcR subfamily.

The chain is Transcriptional regulator GfcR from Methanospirillum hungatei JF-1 (strain ATCC 27890 / DSM 864 / NBRC 100397 / JF-1).